We begin with the raw amino-acid sequence, 224 residues long: Ribonuclease HII (224 aa).

The 210-residue stretch at 1–210 (MKVAGADEAG…AKKIEEKFKR (210 aa)) folds into the RNase H type-2 domain. The a divalent metal cation site is built by aspartate 7, glutamate 8, and aspartate 105.

This sequence belongs to the RNase HII family. The cofactor is Mn(2+). It depends on Mg(2+) as a cofactor.

It localises to the cytoplasm. It catalyses the reaction Endonucleolytic cleavage to 5'-phosphomonoester.. Endonuclease that specifically degrades the RNA of RNA-DNA hybrids. The chain is Ribonuclease HII (rnhB) from Pyrococcus abyssi (strain GE5 / Orsay).